A 109-amino-acid chain; its full sequence is uncharacterized protein (109 aa).

A signal peptide spans 1 to 19 (MKKFALLAGLFVFAPMTWA).

This is an uncharacterized protein from Escherichia coli O6:H1 (strain CFT073 / ATCC 700928 / UPEC).